A 441-amino-acid polypeptide reads, in one-letter code: Gluconate 2-dehydrogenase cytochrome c subunit (441 aa).

Positions 1–19 are cleaved as a signal peptide; that stretch reads MMKSILALVLGTLSFAALA. 3 consecutive Cytochrome c domains span residues 26–129, 173–289, and 312–403; these read ALVK…MHGV, PVLA…KSLG, and DDSQ…RGSW. Heme c is bound by residues cysteine 40, cysteine 43, histidine 44, cysteine 188, cysteine 191, histidine 192, cysteine 325, cysteine 328, and histidine 329.

As to quaternary structure, heterotrimer. The cofactor is FAD. Binds 3 heme c groupd covalently per subunit.

Its subcellular location is the cell membrane. It catalyses the reaction D-gluconate + A = 2-dehydro-D-gluconate + AH2. Part of the heterotrimer that catalyzes the conversion of D-gluconate to 2-dehydro-D-gluconate. The sequence is that of Gluconate 2-dehydrogenase cytochrome c subunit from Pantoea cypripedii (Pectobacterium cypripedii).